We begin with the raw amino-acid sequence, 546 residues long: Glucose-6-phosphate isomerase 1 (546 aa).

Glutamate 353 acts as the Proton donor in catalysis. Catalysis depends on residues histidine 384 and lysine 512.

It belongs to the GPI family.

The protein localises to the cytoplasm. It carries out the reaction alpha-D-glucose 6-phosphate = beta-D-fructose 6-phosphate. It participates in carbohydrate biosynthesis; gluconeogenesis. The protein operates within carbohydrate degradation; glycolysis; D-glyceraldehyde 3-phosphate and glycerone phosphate from D-glucose: step 2/4. Catalyzes the reversible isomerization of glucose-6-phosphate to fructose-6-phosphate. The protein is Glucose-6-phosphate isomerase 1 of Colwellia psychrerythraea (strain 34H / ATCC BAA-681) (Vibrio psychroerythus).